Reading from the N-terminus, the 113-residue chain is Antisense of depressing factor protein 1 (113 aa).

A compositionally biased stretch (basic residues) spans 1-11 (MGKCSMKKKGV). The disordered stretch occupies residues 1 to 35 (MGKCSMKKKGVGKNVGVGKKVQKKRSISTAERKRT).

It belongs to the ADF1 family.

The protein resides in the nucleus. In terms of biological role, transcriptional repressor which negatively regulates transcription of FYV5 by binding to the promoter on the sense strand. This is Antisense of depressing factor protein 1 from Saccharomyces cerevisiae (strain ATCC 204508 / S288c) (Baker's yeast).